A 522-amino-acid chain; its full sequence is 3'3'-cGAMP-specific phosphodiesterase 2 (522 aa).

In terms of domain architecture, Response regulatory spans 36–160; sequence CVLLVDDDEQ…QKLRTLLYSM (125 aa). Position 91 is a 4-aspartylphosphate (Asp91). Residues 325-522 enclose the HD-GYP domain; that stretch reads LRETSKELVY…FIAIRASLPD (198 aa). 2 residues coordinate a divalent metal cation: His382 and Asp383. Lys386 acts as the Proton donor in catalysis. The a divalent metal cation site is built by His411, His437, His438, and Asp466.

In terms of assembly, homodimer. The cofactor is Mn(2+).

The enzyme catalyses 3',3'-cGAMP + H2O = 5'-pApG-3' + H(+). Its function is as follows. Phosphodiesterase (PDE) that catalyzes the hydrolysis of 3'3'-cyclic GMP-AMP (3'3'-cGAMP), leading to linear 5'-pApG. Counteracts the function of the 3'3'-cGAMP synthase DncV, and is involved in the modulation of intracellular 3'3'-cGAMP levels. Enhances bacterial chemotaxis and inhibits intestinal colonization in vivo. Thus exerts a crucial role in regulating bacterial infectivity through catalyzing 3'3'-cGAMP degradation. Is specific for 3'3'-cGAMP since it cannot degrade other cGAMP linkage isomers (3'2'-, 2'3'-, and 2'2'-cGAMPs). Is also able to hydrolyze c-di-GMP but not c-di-AMP. The protein is 3'3'-cGAMP-specific phosphodiesterase 2 of Vibrio cholerae serotype O1 (strain ATCC 39315 / El Tor Inaba N16961).